Consider the following 400-residue polypeptide: Cysteine desulfurase 1 (400 aa).

Pyridoxal 5'-phosphate contacts are provided by residues 71–72 (GT), Asn-150, Gln-178, and 198–200 (SGH). Lys-201 bears the N6-(pyridoxal phosphate)lysine mark. Thr-236 is a binding site for pyridoxal 5'-phosphate. Cys-324 acts as the Cysteine persulfide intermediate in catalysis. Cys-324 contacts [2Fe-2S] cluster.

This sequence belongs to the class-V pyridoxal-phosphate-dependent aminotransferase family. NifS/IscS subfamily. As to quaternary structure, homodimer. Pyridoxal 5'-phosphate serves as cofactor.

It carries out the reaction (sulfur carrier)-H + L-cysteine = (sulfur carrier)-SH + L-alanine. Functionally, catalyzes the removal of elemental sulfur atoms from cysteine to produce alanine. Seems to participate in the biosynthesis of the nitrogenase metalloclusters by providing the inorganic sulfur required for the Fe-S core formation. In Trichormus variabilis (strain ATCC 29413 / PCC 7937) (Anabaena variabilis), this protein is Cysteine desulfurase 1.